The sequence spans 260 residues: Cytochrome c oxidase subunit 2 (260 aa).

Residues 1 to 39 (MKFEWLFLTIAPCDAAEPWQLGFQDAATPMMQGIIDLHH) lie on the Mitochondrial intermembrane side of the membrane. A helical membrane pass occupies residues 40–61 (DIFFFLILILVFVSRILVRALW). Topologically, residues 62 to 76 (HFHYKKNPIPQRIVH) are mitochondrial matrix. The helical transmembrane segment at 77–104 (GTTIEILRTIFPSIIPMFIAIPSFALLY) threads the bilayer. Topologically, residues 105 to 260 (SMDEVVVDPA…QLIPQTTGEA (156 aa)) are mitochondrial intermembrane. His-186, Cys-221, Glu-223, Cys-225, and His-229 together coordinate Cu cation. Mg(2+) is bound at residue Glu-223.

It belongs to the cytochrome c oxidase subunit 2 family. Component of the cytochrome c oxidase (complex IV, CIV), a multisubunit enzyme composed of a catalytic core of 3 subunits and several supernumerary subunits. The complex exists as a monomer or a dimer and forms supercomplexes (SCs) in the inner mitochondrial membrane with ubiquinol-cytochrome c oxidoreductase (cytochrome b-c1 complex, complex III, CIII). The cofactor is Cu cation.

The protein localises to the mitochondrion inner membrane. The catalysed reaction is 4 Fe(II)-[cytochrome c] + O2 + 8 H(+)(in) = 4 Fe(III)-[cytochrome c] + 2 H2O + 4 H(+)(out). Functionally, component of the cytochrome c oxidase, the last enzyme in the mitochondrial electron transport chain which drives oxidative phosphorylation. The respiratory chain contains 3 multisubunit complexes succinate dehydrogenase (complex II, CII), ubiquinol-cytochrome c oxidoreductase (cytochrome b-c1 complex, complex III, CIII) and cytochrome c oxidase (complex IV, CIV), that cooperate to transfer electrons derived from NADH and succinate to molecular oxygen, creating an electrochemical gradient over the inner membrane that drives transmembrane transport and the ATP synthase. Cytochrome c oxidase is the component of the respiratory chain that catalyzes the reduction of oxygen to water. Electrons originating from reduced cytochrome c in the intermembrane space (IMS) are transferred via the dinuclear copper A center (CU(A)) of subunit 2 and heme A of subunit 1 to the active site in subunit 1, a binuclear center (BNC) formed by heme A3 and copper B (CU(B)). The BNC reduces molecular oxygen to 2 water molecules using 4 electrons from cytochrome c in the IMS and 4 protons from the mitochondrial matrix. In Glycine max (Soybean), this protein is Cytochrome c oxidase subunit 2 (COX2).